A 196-amino-acid polypeptide reads, in one-letter code: uncharacterized protein (196 aa).

The N-terminal stretch at 1-21 is a signal peptide; the sequence is MNGKQCFCFFLFHLFYTGLFA. Cys22 is lipidated: N-palmitoyl cysteine. Cys22 carries S-diacylglycerol cysteine lipidation.

Its subcellular location is the cell membrane. This is an uncharacterized protein from Treponema pallidum (strain Nichols).